Reading from the N-terminus, the 871-residue chain is Major vault protein (871 aa).

9 MVP repeats span residues 2–69, 70–124, 125–177, 178–230, 231–285, 286–336, 337–407, 408–482, and 483–545; these read SKRP…VPPR, HYCV…EVTP, LQIV…EIIK, ATVI…DIVN, AFIL…GVVD, VTTL…IQDV, YVLS…RRQA, IPLD…KTMV, and VSYR…LLGP. Positions 356-381 are disordered; sequence TEAQEEDEEEEEEEEQAKKTSVQRRP. Residues 357-370 are compositionally biased toward acidic residues; the sequence is EAQEEDEEEEEEEE. The interval 684-710 is disordered; the sequence is QEATARHEAERLEQEARGKLERQKITD. Basic and acidic residues predominate over residues 687–710; that stretch reads TARHEAERLEQEARGKLERQKITD. One can recognise an IQ domain in the interval 688–717; sequence ARHEAERLEQEARGKLERQKITDQAEAERA.

The vault ribonucleoprotein particle is a huge (400 A x 670 A) cage structure of 12.9 MDa. It consists of a dimer of half-vaults, with each half-vault comprising 39 identical major vault protein (MVP) chains, PARP4 and one or more vault RNAs (vRNAs).

It is found in the cytoplasm. The protein localises to the nucleus. In terms of biological role, required for normal vault structure. Vaults are multi-subunit structures that may act as scaffolds for proteins involved in signal transduction. Vaults may also play a role in nucleo-cytoplasmic transport. This Ictalurus punctatus (Channel catfish) protein is Major vault protein (mvp).